A 153-amino-acid chain; its full sequence is UPF0311 protein Rpal_1987 (153 aa).

The protein belongs to the UPF0311 family.

In Rhodopseudomonas palustris (strain TIE-1), this protein is UPF0311 protein Rpal_1987.